Here is a 289-residue protein sequence, read N- to C-terminus: GTPase Era (289 aa).

Residues 2 to 167 (KSGFVSLIGR…LREIAKLLPE (166 aa)) enclose the Era-type G domain. The tract at residues 10-17 (GRTNAGKS) is G1. 10–17 (GRTNAGKS) lines the GTP pocket. Positions 36 to 40 (NATRR) are G2. A G3 region spans residues 57–60 (DTPG). Residues 57 to 61 (DTPGL) and 116 to 119 (TKTD) each bind GTP. Residues 116–119 (TKTD) are G4. A G5 region spans residues 146-148 (VNI). The KH type-2 domain maps to 186-274 (YRDFILESVY…HLNLQIFVKK (89 aa)).

It belongs to the TRAFAC class TrmE-Era-EngA-EngB-Septin-like GTPase superfamily. Era GTPase family. In terms of assembly, monomer.

It is found in the cytoplasm. It localises to the cell inner membrane. In terms of biological role, an essential GTPase that binds both GDP and GTP, with rapid nucleotide exchange. Plays a role in 16S rRNA processing and 30S ribosomal subunit biogenesis and possibly also in cell cycle regulation and energy metabolism. In Campylobacter hominis (strain ATCC BAA-381 / DSM 21671 / CCUG 45161 / LMG 19568 / NCTC 13146 / CH001A), this protein is GTPase Era.